Consider the following 119-residue polypeptide: MALKIRLRQQGRRNHVVYRLVLADVESPRDGRYIELLGWYDPHSTVNYQLKSERIFHWLNQGAELTEKAAVLIKQGAPGVYSELMAKKMTRKAVMCQKRRAYRQRRSLKRAETAQAVSK.

This sequence belongs to the bacterial ribosomal protein bS16 family.

This chain is Small ribosomal subunit protein bS16, found in Chlamydia felis (strain Fe/C-56) (Chlamydophila felis).